The following is a 988-amino-acid chain: UvrABC system protein A (988 aa).

An ATP-binding site is contributed by 33 to 40; the sequence is GLSGSGKS. A C4-type zinc finger spans residues 255 to 282; the sequence is CPVCDYSLPELEPRLFSFNAPVGACPSC. 2 consecutive ABC transporter domains span residues 312–589 and 609–938; these read WDRR…PRSL and PNPK…QFLA. ATP is bound at residue 642–649; it reads GVSGSGKS. Residues 741 to 767 form a C4-type zinc finger; it reads CEACQGDGMIKVEMHFLPDVYVPCDVC. The disordered stretch occupies residues 948–988; that stretch reads ETRPAAMANKPDARPPRKVKPEKVAKATKTATKKTAKKKAS. Basic and acidic residues predominate over residues 958–972; sequence PDARPPRKVKPEKVA. Over residues 978–988 the composition is skewed to basic residues; sequence ATKKTAKKKAS.

The protein belongs to the ABC transporter superfamily. UvrA family. Forms a heterotetramer with UvrB during the search for lesions.

It is found in the cytoplasm. The UvrABC repair system catalyzes the recognition and processing of DNA lesions. UvrA is an ATPase and a DNA-binding protein. A damage recognition complex composed of 2 UvrA and 2 UvrB subunits scans DNA for abnormalities. When the presence of a lesion has been verified by UvrB, the UvrA molecules dissociate. The protein is UvrABC system protein A of Xanthomonas campestris pv. campestris (strain ATCC 33913 / DSM 3586 / NCPPB 528 / LMG 568 / P 25).